Consider the following 349-residue polypeptide: Methylthioribose-1-phosphate isomerase (349 aa).

Residues 51–53 (RGA), R94, and Q199 contribute to the substrate site. The Proton donor role is filled by D240. 250-251 (NK) is a substrate binding site.

Belongs to the EIF-2B alpha/beta/delta subunits family. MtnA subfamily. Homodimer.

The catalysed reaction is 5-(methylsulfanyl)-alpha-D-ribose 1-phosphate = 5-(methylsulfanyl)-D-ribulose 1-phosphate. It functions in the pathway amino-acid biosynthesis; L-methionine biosynthesis via salvage pathway; L-methionine from S-methyl-5-thio-alpha-D-ribose 1-phosphate: step 1/6. Catalyzes the interconversion of methylthioribose-1-phosphate (MTR-1-P) into methylthioribulose-1-phosphate (MTRu-1-P). This Bacillus mycoides (strain KBAB4) (Bacillus weihenstephanensis) protein is Methylthioribose-1-phosphate isomerase.